We begin with the raw amino-acid sequence, 668 residues long: UvrABC system protein B (668 aa).

Residues Asp-36 to Arg-423 enclose the Helicase ATP-binding domain. Gly-49–Thr-56 lines the ATP pocket. A Beta-hairpin motif is present at residues Tyr-102–Ile-125. The region spanning Gln-440–Ile-606 is the Helicase C-terminal domain. A UVR domain is found at Gln-632 to Met-667.

This sequence belongs to the UvrB family. In terms of assembly, forms a heterotetramer with UvrA during the search for lesions. Interacts with UvrC in an incision complex.

The protein localises to the cytoplasm. Functionally, the UvrABC repair system catalyzes the recognition and processing of DNA lesions. A damage recognition complex composed of 2 UvrA and 2 UvrB subunits scans DNA for abnormalities. Upon binding of the UvrA(2)B(2) complex to a putative damaged site, the DNA wraps around one UvrB monomer. DNA wrap is dependent on ATP binding by UvrB and probably causes local melting of the DNA helix, facilitating insertion of UvrB beta-hairpin between the DNA strands. Then UvrB probes one DNA strand for the presence of a lesion. If a lesion is found the UvrA subunits dissociate and the UvrB-DNA preincision complex is formed. This complex is subsequently bound by UvrC and the second UvrB is released. If no lesion is found, the DNA wraps around the other UvrB subunit that will check the other stand for damage. The chain is UvrABC system protein B from Streptococcus thermophilus (strain CNRZ 1066).